A 273-amino-acid chain; its full sequence is Hemin import ATP-binding protein HmuV (273 aa).

Residues 2-256 (LTAHHLDVAR…AHIAQCYGFA (255 aa)) form the ABC transporter domain. 34-41 (GRNGAGKS) contacts ATP.

It belongs to the ABC transporter superfamily. Heme (hemin) importer (TC 3.A.1.14.5) family. In terms of assembly, the complex is composed of two ATP-binding proteins (HmuV), two transmembrane proteins (HmuU) and a solute-binding protein (HmuT).

It is found in the cell inner membrane. Functionally, part of the ABC transporter complex HmuTUV involved in hemin import. Responsible for energy coupling to the transport system. This Burkholderia lata (strain ATCC 17760 / DSM 23089 / LMG 22485 / NCIMB 9086 / R18194 / 383) protein is Hemin import ATP-binding protein HmuV.